A 168-amino-acid chain; its full sequence is MPACRLCLLATGLLLGLLLFTPLSATGTRAEKPGVCPQLEPITDCVKACILDNDCQDNYKCCQAGCGSVCSKPNGLSEGKLSRTATGTTTLSAGLARTSPLSRGQVSTKPPVVTKEGGNGEKQGTCPSVDFPKLGLCEDQCQMDSQCSGNMKCCRNGCGKMGCTTPKF.

Residues 1–30 form the signal peptide; that stretch reads MPACRLCLLATGLLLGLLLFTPLSATGTRA. WAP domains lie at 31 to 74 and 119 to 167; these read EKPG…SKPN and NGEK…TTPK. Intrachain disulfides connect Cys-36–Cys-62, Cys-45–Cys-66, Cys-49–Cys-61, and Cys-55–Cys-70. Positions 100 to 123 are disordered; sequence PLSRGQVSTKPPVVTKEGGNGEKQ. Disulfide bonds link Cys-126-Cys-154, Cys-137-Cys-158, Cys-141-Cys-153, and Cys-147-Cys-163.

As to quaternary structure, homotrimer; disulfide-linked.

The protein localises to the secreted. Broad range protease inhibitor. This chain is WAP four-disulfide core domain protein 2 (Wfdc2), found in Rattus norvegicus (Rat).